The chain runs to 470 residues: Zinc finger protein weckle (470 aa).

The interval 1-103 (MGVPTSDWIY…DALRLEYGLP (103 aa)) is required for homodimerization. One can recognise a ZAD domain in the interval 10-82 (YWCRLCARDD…SKVQAIFELL (73 aa)). The Zn(2+) site is built by Cys12, Cys15, Cys55, and Cys58. The segment at 156 to 265 (NSDPKVLASP…LSMSPHGSQS (110 aa)) is disordered. Ser168 is modified (phosphoserine). A compositionally biased stretch (acidic residues) spans 195–208 (ESDDEEAILDEDEA). Over residues 214 to 225 (LKRKRGRPKGSG) the composition is skewed to basic residues. Positions 237–254 (TSREPDDNAKSKQDDKTS) are enriched in basic and acidic residues. Over residues 255–265 (ELSMSPHGSQS) the composition is skewed to polar residues. 6 consecutive C2H2-type zinc fingers follow at residues 271 to 294 (YPCK…HDMH), 300 to 322 (YVCD…QLVH), 328 to 350 (CICP…SQTH), 355 to 377 (FECN…KYVH), 383 to 405 (FKCE…LLGH), and 411 to 434 (YVCK…WKKH).

As to quaternary structure, homodimer. Interacts with Myd88 and Toll.

Its subcellular location is the cell membrane. In terms of biological role, acts as an adapter to assemble/stabilize a Toll/wek/Myd88/tube complex; required for efficient recruitment of Myd88 to Toll. Dispensable for innate immune response; plays a minimal role, if any, in the immune defense against Gram-positive bacteria and fungi. Involved in dorsoventral axis determination. This Drosophila melanogaster (Fruit fly) protein is Zinc finger protein weckle.